The following is a 539-amino-acid chain: Sorting nexin-27 (539 aa).

Positions 1 to 40 (MADEDGEGIHPSAPHRNGGGGGGSGLHCAGNGGGGGGGPR) are disordered. A compositionally biased stretch (gly residues) spans 17-39 (NGGGGGGSGLHCAGNGGGGGGGP). The region spanning 41-134 (VVRIVKSESG…ELILTVLSVP (94 aa)) is the PDZ domain. 2 positions are modified to phosphoserine: serine 49 and serine 60. The region spanning 159–267 (QAVPISVPTY…EFLSESDENY (109 aa)) is the PX domain. Positions 271–360 (SDVELRVALP…TCLTIRKWLF (90 aa)) constitute a Ras-associating domain. An FERM-like region F1 region spans residues 271 to 360 (SDVELRVALP…TCLTIRKWLF (90 aa)). Residues 371–419 (NDLAVTYFFHQAVDDVKKGYIKAEEKSYQLQKLHEQRKMVMYLNMLRTC) form an FERM-like region F2 region. Positions 423–523 (NEIIFPHCAC…RVFCELKWRK (101 aa)) are FERM-like region F3.

In terms of assembly, core component of the SNX27-retromer, a multiprotein complex composed of SNX27, the WASH complex and the retromer complex. Interacts (via the FERM-like regions) with the WASH complex. Interacts with SNX1. Interacts with CYTIP. Interacts with DGKZ. Interacts with MCC. Interacts (via PDZ domain) with a number of target transmembrane proteins (via PDZ-binding motif): ABCC4, ADRB2, ARHGEF7, GRIA1, GRIA2, GRIN1, GRIN2A GRIN2C, KCNJ6, KCNJ9 and SLC2A1/GLUT1. Interacts (via PDZ domains) with SLC9A3; directs SLC9A3 membrane insertion from early endosomes to the plasma membrane. Expressed in cells of hematopoietic origin.

Its subcellular location is the early endosome membrane. The protein resides in the cytoplasm. It is found in the cytosol. Its function is as follows. Involved in the retrograde transport from endosome to plasma membrane, a trafficking pathway that promotes the recycling of internalized transmembrane proteins. Following internalization, endocytosed transmembrane proteins are delivered to early endosomes and recycled to the plasma membrane instead of being degraded in lysosomes. SNX27 specifically binds and directs sorting of a subset of transmembrane proteins containing a PDZ-binding motif at the C-terminus: following interaction with target transmembrane proteins, associates with the retromer complex, preventing entry into the lysosomal pathway, and promotes retromer-tubule based plasma membrane recycling. SNX27 also binds with the WASH complex. Interacts with membranes containing phosphatidylinositol-3-phosphate (PtdIns(3P)). May participate in establishment of natural killer cell polarity. Recruits CYTIP to early endosomes. The sequence is that of Sorting nexin-27 (Snx27) from Mus musculus (Mouse).